A 337-amino-acid polypeptide reads, in one-letter code: PHD finger protein 11 (337 aa).

Residues 42–78 (KRICALCPKDLECSVLYFAQSENIAAHENCLLYSSAL) form a C2HC pre-PHD-type zinc finger. The segment at 108-160 (LKCTFCGKKGATVGCDLKSCFKNYHFFCAKNDHAVLQADGRTGIYKVFCQQHA) adopts a PHD-type zinc-finger fold.

In terms of assembly, interacts with BRCA1 and RELA.

It is found in the nucleus. Positive regulator of Th1-type cytokine gene expression. This chain is PHD finger protein 11 (PHF11), found in Bos taurus (Bovine).